The chain runs to 1023 residues: MFRQSKTIITKLTNLSFQGSWRSRGSSAVEKALKYTVGQKIHNFTVKEVTAVPDLFLTAVKLSHDATGAQYLHAARDDSNNLFSVLFRTTPMDSTGVPHILEHTVLCGSQRFPCRDPFFKMLNRSLSTFMNAFTASDYTMYPFSTQNAKDFQNLLSVYLDAVFFPCLRELDFWQEGWRLEHENPTDPSSPLVFKGVVFNEMKGVFSDNERLYAQHLQNKLLPDHTYSVVSGGEPLAIPELTWEQLKHFHATHYHPSNARFFTYGDLPLEQHLQQIEEEAMSKFERTEPNTAVPPQTPWDKPRMDHVSCRPDALAPDPVKQNTLCMSFLLGDITDTFEMFTLSLLSSLMMSGPNSPFYKALIEPKIGSDFSSSAGFDGSTRQASFTIGLQGMAEDDTETVKHIIAQTIDDIIASGFEEEQIEALLHKIEIQMKHQSTSFGLALASYIASLWNHDGDPVQLLKISESVSRFRQCLKENPRYLQEKVQHYFKNNTHQLTLSMSPDERFLEKQAEAEEQKLQQKIQILSSEDRKDIYEKGLQLLAVQSTTQDASCLPALKVSDIEPIIPYTPVQPGAAGGVPVQYCEQPTNGMVYFRAMSNINSLPEDLKIYVPLFCSVITKMGSGMLDYRQQAQRIELKTGGLSVSPQIIPDTEDLDLYEQGIILSSSCLERNLPDMFQLWSDLFNSPRFDDEERLRVLVMMSAQELSNGISYSGHMYAMTRAARSLTPTADLQESFSGMDQVKFMKRIAEMTDLTSILRKLPRIKRHLFNPENMRCALNATPQKMPDVAAEVERFIGNIAGNRKERKPVRPSVVERALGPEAGAAATRKLISEAHFKPCQMKTYFQLPFNVNFVSECVRTVPFTHADYASLCILGRMMTAKFLHGEIREKGGAYGGGARMGGGGLFSFYSYRDPNSTQTLSAFRGGVEWARAGKFTQQDIDEAKLSVFSAVDAPVAPSDKGLGRFLNGITDEMKQAHRERLFAVTERNLIDVAGRYLGIGQQTCGVAILGPENESIRKDPSWVVK.

The transit peptide at 1–62 directs the protein to the mitochondrion; that stretch reads MFRQSKTIIT…PDLFLTAVKL (62 aa). His-99 provides a ligand contact to Zn(2+). Glu-102 acts as the Proton acceptor in catalysis. His-103 and Glu-200 together coordinate Zn(2+). Cys-114 and Cys-551 are joined by a disulfide.

The protein belongs to the peptidase M16 family. PreP subfamily. In terms of assembly, monomer and homodimer; homodimerization is induced by binding of the substrate. The cofactor is Zn(2+). Post-translationally, a disulfide bond locks the enzyme in the closed conformation preventing substrate entry into the catalytic chamber.

Its subcellular location is the mitochondrion matrix. With respect to regulation, mainly exists in a closed and catalytically competent conformation but a closed-to-open switch allows substrate entry into the catalytic chamber. Substrate binding induces closure and dimerization. A disulfide bond may lock the enzyme in a closed conformation preventing substrate entry into the catalytic chamber, participating in redox regulation of the enzyme. Inhibited by metal-chelating agents. Inhibited by nickel and zinc excess, and slightly activated by manganese. Functionally, metalloendopeptidase of the mitochondrial matrix that functions in peptide cleavage and degradation rather than in protein processing. Has an ATP-independent activity. Specifically cleaves peptides in the range of 5 to 65 residues. Shows a preference for cleavage after small polar residues and before basic residues, but without any positional preference. Degrades the transit peptides of mitochondrial proteins after their cleavage. Also degrades other unstructured peptides. The polypeptide is Presequence protease, mitochondrial (pitrm1) (Danio rerio (Zebrafish)).